The sequence spans 123 residues: DNA-directed RNA polymerase I subunit RPA12 (123 aa).

Residues cysteine 17, cysteine 20, cysteine 35, cysteine 38, cysteine 84, and cysteine 87 each coordinate Zn(2+). The C4-type zinc-finger motif lies at 17 to 38; sequence CPDCGSVLPLPGIQDTVICSRC. The TFIIS-type zinc finger occupies 80–120; the sequence is IDRRCPRCGHEGMAYHTRQMRSADEGQTVFYTCINCKFQEK. Positions 103-104 match the Hairpin motif; that stretch reads DE. Zn(2+) is bound by residues cysteine 112 and cysteine 115.

It belongs to the archaeal RpoM/eukaryotic RPA12/RPB9/RPC11 RNA polymerase family. Component of the RNA polymerase I (Pol I) complex consisting of 13 subunits: a ten-subunit catalytic core composed of POLR1A/RPA1, POLR1B/RPA2, POLR1C/RPAC1, POLR1D/RPAC2, POLR1H/RPA12, POLR2E/RPABC1, POLR2F/RPABC2, POLR2H/RPABC3, POLR2K/RPABC4 and POLR2L/RPABC5; a mobile stalk subunit POLR1F/RPA43 protruding from the core and additional subunits homologous to general transcription factors POLR1E/RPA49 and POLR1G/RPA34. Part of Pol I pre-initiation complex (PIC), in which Pol I core assembles with RRN3 and promoter-bound UTBF and SL1/TIF-IB complex.

It is found in the nucleus. It localises to the nucleolus. Functionally, core component of RNA polymerase I (Pol I), a DNA-dependent RNA polymerase which synthesizes ribosomal RNA precursors using the four ribonucleoside triphosphates as substrates. Can mediate Pol I proofreading of the nascent RNA transcript. Anchors into the Pol I active site to monitor transcription fidelity and cleave mis-incorporated 5'-ribonucleotides. The protein is DNA-directed RNA polymerase I subunit RPA12 of Mus musculus (Mouse).